Reading from the N-terminus, the 192-residue chain is GTP cyclohydrolase-2 (192 aa).

Residue 50–54 (RLHSE) coordinates GTP. Cys55, Cys66, and Cys68 together coordinate Zn(2+). GTP-binding positions include 92–94 (EGR) and Thr114. Asp126 (proton acceptor) is an active-site residue. Residue Arg128 is the Nucleophile of the active site. GTP-binding residues include Thr149 and Lys154.

This sequence belongs to the GTP cyclohydrolase II family. Zn(2+) serves as cofactor.

It carries out the reaction GTP + 4 H2O = 2,5-diamino-6-hydroxy-4-(5-phosphoribosylamino)-pyrimidine + formate + 2 phosphate + 3 H(+). It participates in cofactor biosynthesis; riboflavin biosynthesis; 5-amino-6-(D-ribitylamino)uracil from GTP: step 1/4. Catalyzes the conversion of GTP to 2,5-diamino-6-ribosylamino-4(3H)-pyrimidinone 5'-phosphate (DARP), formate and pyrophosphate. The sequence is that of GTP cyclohydrolase-2 from Helicobacter pylori (strain J99 / ATCC 700824) (Campylobacter pylori J99).